A 222-amino-acid chain; its full sequence is Phosphoribosylformylglycinamidine synthase subunit PurQ (222 aa).

Residues serine 2 to lysine 222 enclose the Glutamine amidotransferase type-1 domain. Cysteine 86 serves as the catalytic Nucleophile. Active-site residues include histidine 194 and glutamate 196.

In terms of assembly, part of the FGAM synthase complex composed of 1 PurL, 1 PurQ and 2 PurS subunits.

Its subcellular location is the cytoplasm. It carries out the reaction N(2)-formyl-N(1)-(5-phospho-beta-D-ribosyl)glycinamide + L-glutamine + ATP + H2O = 2-formamido-N(1)-(5-O-phospho-beta-D-ribosyl)acetamidine + L-glutamate + ADP + phosphate + H(+). It catalyses the reaction L-glutamine + H2O = L-glutamate + NH4(+). It participates in purine metabolism; IMP biosynthesis via de novo pathway; 5-amino-1-(5-phospho-D-ribosyl)imidazole from N(2)-formyl-N(1)-(5-phospho-D-ribosyl)glycinamide: step 1/2. Its function is as follows. Part of the phosphoribosylformylglycinamidine synthase complex involved in the purines biosynthetic pathway. Catalyzes the ATP-dependent conversion of formylglycinamide ribonucleotide (FGAR) and glutamine to yield formylglycinamidine ribonucleotide (FGAM) and glutamate. The FGAM synthase complex is composed of three subunits. PurQ produces an ammonia molecule by converting glutamine to glutamate. PurL transfers the ammonia molecule to FGAR to form FGAM in an ATP-dependent manner. PurS interacts with PurQ and PurL and is thought to assist in the transfer of the ammonia molecule from PurQ to PurL. In Helicobacter hepaticus (strain ATCC 51449 / 3B1), this protein is Phosphoribosylformylglycinamidine synthase subunit PurQ.